The primary structure comprises 282 residues: Shikimate dehydrogenase (NADP(+)) (282 aa).

Residues 18–20 (SRS) and Thr-65 contribute to the shikimate site. Catalysis depends on Lys-69, which acts as the Proton acceptor. NADP(+) is bound at residue Glu-81. Shikimate is bound by residues Asn-90 and Asp-105. Residues 130-134 (GAGGA), 154-159 (NRTPAR), and Met-222 contribute to the NADP(+) site. Tyr-224 provides a ligand contact to shikimate. Gly-245 serves as a coordination point for NADP(+).

The protein belongs to the shikimate dehydrogenase family. Homodimer.

The catalysed reaction is shikimate + NADP(+) = 3-dehydroshikimate + NADPH + H(+). It participates in metabolic intermediate biosynthesis; chorismate biosynthesis; chorismate from D-erythrose 4-phosphate and phosphoenolpyruvate: step 4/7. Involved in the biosynthesis of the chorismate, which leads to the biosynthesis of aromatic amino acids. Catalyzes the reversible NADPH linked reduction of 3-dehydroshikimate (DHSA) to yield shikimate (SA). This Acidovorax ebreus (strain TPSY) (Diaphorobacter sp. (strain TPSY)) protein is Shikimate dehydrogenase (NADP(+)).